The following is a 122-amino-acid chain: MACNCPPQKNTACCSTSEAQDKCTCQKGNCECKACPNSTKTSESGGKASTCNCGGSGEACTCPPGQCACDKCPKKAKSVSTCGCGGSGAACSCPPGKCACDNCPKQAQEKVSSCACSGSGAA.

Residues Met1 to Cys35 form a cys-rich copper-binding 1 region. A spacer B1 region spans residues Pro36–Thr50. Residues Cys51–Cys72 form a cys-rich copper-binding 2 region. A spacer B2 region spans residues Pro73 to Thr81. A cys-rich copper-binding 3 region spans residues Cys82 to Cys103. The segment at Pro104–Ser113 is spacer B3. Residues Cys114–Ala122 form a cys-rich copper-binding 4 region.

The protein belongs to the metallothionein superfamily.

The protein localises to the cytoplasm. It localises to the cell cortex. Copper metallothionein that protects the cell against copper toxicity by tightly chelating copper ions. Required for antioxidant-mediated growth rescue in the presence of fluconazole. Acts as a critical factors for lung colonization and virulence. The chain is Copper metallothionein 1 from Cryptococcus neoformans var. grubii serotype A (strain H99 / ATCC 208821 / CBS 10515 / FGSC 9487) (Filobasidiella neoformans var. grubii).